We begin with the raw amino-acid sequence, 264 residues long: Thymidylate synthase (264 aa).

Arg21 is a binding site for dUMP. His51 provides a ligand contact to (6R)-5,10-methylene-5,6,7,8-tetrahydrofolate. 126–127 (RR) contacts dUMP. Cys146 (nucleophile) is an active-site residue. Residues 166 to 169 (RSAD), Asn177, and 207 to 209 (HIY) contribute to the dUMP site. Asp169 provides a ligand contact to (6R)-5,10-methylene-5,6,7,8-tetrahydrofolate. (6R)-5,10-methylene-5,6,7,8-tetrahydrofolate is bound at residue Ala263.

The protein belongs to the thymidylate synthase family. Bacterial-type ThyA subfamily. In terms of assembly, homodimer.

The protein resides in the cytoplasm. The catalysed reaction is dUMP + (6R)-5,10-methylene-5,6,7,8-tetrahydrofolate = 7,8-dihydrofolate + dTMP. It functions in the pathway pyrimidine metabolism; dTTP biosynthesis. Its function is as follows. Catalyzes the reductive methylation of 2'-deoxyuridine-5'-monophosphate (dUMP) to 2'-deoxythymidine-5'-monophosphate (dTMP) while utilizing 5,10-methylenetetrahydrofolate (mTHF) as the methyl donor and reductant in the reaction, yielding dihydrofolate (DHF) as a by-product. This enzymatic reaction provides an intracellular de novo source of dTMP, an essential precursor for DNA biosynthesis. The sequence is that of Thymidylate synthase from Methylobacillus flagellatus (strain ATCC 51484 / DSM 6875 / VKM B-1610 / KT).